The following is a 203-amino-acid chain: MHTGEKPYTCEECVKLLTNPQALLYTGAFILNKNFTNVKNAAKPLLNPHPLINKRIHTGEKPYTCEECGKAFYRSSHLTEHKNIHTGEKSYKCEECGNAFYRSSHLTKHKRIHSGQKPYKCEECGKAFRQSSALNEHKKIHTAEKPYKCKECGKAFRWSRSLNEHTNIHIGEKPYTCEECGKDFTWSSTLTVHQRIQTGEKHS.

4 consecutive C2H2-type zinc fingers follow at residues 63 to 85 (YTCEECGKAFYRSSHLTEHKNIH), 91 to 113 (YKCEECGNAFYRSSHLTKHKRIH), 119 to 141 (YKCEECGKAFRQSSALNEHKKIH), and 147 to 169 (YKCKECGKAFRWSRSLNEHTNIH). The segment at 175 to 197 (YTCEECGKDFTWSSTLTVHQRIQ) adopts a C2H2-type 5; degenerate zinc-finger fold.

The protein belongs to the krueppel C2H2-type zinc-finger protein family.

It localises to the nucleus. May be involved in transcriptional regulation. This Homo sapiens (Human) protein is Putative zinc finger protein 876 (ZNF876P).